Consider the following 314-residue polypeptide: Mitochondrial 2-oxoglutarate/malate carrier protein (314 aa).

At Ala-2 the chain carries N-acetylalanine. Phosphoserine is present on Ser-6. Solcar repeat units follow at residues 23–108, 117–208, and 217–306; these read VKFL…LFER, PGFL…SKQF, and DNIL…MNKA. A helical membrane pass occupies residues 24 to 42; the sequence is KFLFGGLAGMGATVFVQPL. At Lys-57 the chain carries N6-succinyllysine. At Lys-73 the chain carries N6-acetyllysine. The chain crosses the membrane as a helical span at residues 83–101; that stretch reads GLSAGLLRQATYTTTRLGI. Tyr-102 bears the Phosphotyrosine mark. The next 3 membrane-spanning stretches (helical) occupy residues 119-140, 183-202, and 222-240; these read FLLK…GPPA, GCIP…LASY, and HFCA…SMPV. Lys-256 bears the N6-acetyllysine mark. A helical transmembrane segment spans residues 281 to 300; sequence GFTPYYARLGPHTVLTFIFL.

The protein belongs to the mitochondrial carrier (TC 2.A.29) family. As to quaternary structure, interacts with SMIM26. In terms of tissue distribution, expressed in liver, heart and brain.

It is found in the mitochondrion inner membrane. The enzyme catalyses (S)-malate(in) + 2-oxoglutarate(out) = (S)-malate(out) + 2-oxoglutarate(in). It carries out the reaction malonate(in) + 2-oxoglutarate(out) = malonate(out) + 2-oxoglutarate(in). The catalysed reaction is succinate(in) + 2-oxoglutarate(out) = succinate(out) + 2-oxoglutarate(in). It catalyses the reaction maleate(in) + 2-oxoglutarate(out) = maleate(out) + 2-oxoglutarate(in). The enzyme catalyses oxaloacetate(in) + 2-oxoglutarate(out) = oxaloacetate(out) + 2-oxoglutarate(in). Catalyzes the transport of 2-oxoglutarate (alpha-oxoglutarate) across the inner mitochondrial membrane in an electroneutral exchange for malate. Can also exchange 2-oxoglutarate for other dicarboxylic acids such as malonate, succinate, maleate and oxaloacetate, although with lower affinity. Contributes to several metabolic processes, including the malate-aspartate shuttle, the oxoglutarate/isocitrate shuttle, in gluconeogenesis from lactate, and in nitrogen metabolism. Maintains mitochondrial fusion and fission events, and the organization and morphology of cristae. Involved in the regulation of apoptosis. Helps protect from cytotoxic-induced apoptosis by modulating glutathione levels in mitochondria. The protein is Mitochondrial 2-oxoglutarate/malate carrier protein (Slc25a11) of Rattus norvegicus (Rat).